Consider the following 303-residue polypeptide: UDP-N-acetylenolpyruvoylglucosamine reductase (303 aa).

An FAD-binding PCMH-type domain is found at 27-191 (VGGPAARLYK…ISAKLQLTPG (165 aa)). Arginine 171 is a catalytic residue. Serine 220 serves as the catalytic Proton donor. The active site involves glutamate 291.

The protein belongs to the MurB family. Requires FAD as cofactor.

It localises to the cytoplasm. The enzyme catalyses UDP-N-acetyl-alpha-D-muramate + NADP(+) = UDP-N-acetyl-3-O-(1-carboxyvinyl)-alpha-D-glucosamine + NADPH + H(+). Its pathway is cell wall biogenesis; peptidoglycan biosynthesis. Cell wall formation. In Legionella pneumophila (strain Paris), this protein is UDP-N-acetylenolpyruvoylglucosamine reductase.